We begin with the raw amino-acid sequence, 123 residues long: Small ribosomal subunit protein uS12 (123 aa).

Residues 9-32 (ANPREVQKSRKKVPALQQSPQKRG) form a disordered region. The residue at position 89 (D89) is a 3-methylthioaspartic acid.

This sequence belongs to the universal ribosomal protein uS12 family. As to quaternary structure, part of the 30S ribosomal subunit. Contacts proteins S8 and S17. May interact with IF1 in the 30S initiation complex.

With S4 and S5 plays an important role in translational accuracy. In terms of biological role, interacts with and stabilizes bases of the 16S rRNA that are involved in tRNA selection in the A site and with the mRNA backbone. Located at the interface of the 30S and 50S subunits, it traverses the body of the 30S subunit contacting proteins on the other side and probably holding the rRNA structure together. The combined cluster of proteins S8, S12 and S17 appears to hold together the shoulder and platform of the 30S subunit. The protein is Small ribosomal subunit protein uS12 of Bradyrhizobium sp. (strain BTAi1 / ATCC BAA-1182).